The chain runs to 420 residues: uncharacterized protein (420 aa).

This is an uncharacterized protein from Encephalitozoon cuniculi (strain GB-M1) (Microsporidian parasite).